Consider the following 300-residue polypeptide: Platelet-derived growth factor D (300 aa).

Residues 1–114 (QVTGNGHVQS…PGFKIYYSFV (114 aa)) enclose the CUB domain. Residues C53 and C75 are joined by a disulfide bond. N220 carries an N-linked (GlcNAc...) asparagine glycan.

This sequence belongs to the PDGF/VEGF growth factor family. In terms of assembly, homodimer; disulfide-linked. Interacts with PDGFRB homodimers, and with heterodimers formed by PDGFRA and PDGFRB. Post-translationally, activated by proteolytic cleavage. Proteolytic removal of the N-terminal CUB domain releasing the core domain is necessary for unmasking the receptor-binding epitopes of the core domain. Cleavage after Arg-191 or Arg-193 by urokinase plasminogen activator gives rise to the active form.

The protein resides in the secreted. Functionally, growth factor that plays an essential role in the regulation of embryonic development, cell proliferation, cell migration, survival and chemotaxis. Potent mitogen for cells of mesenchymal origin. Plays an important role in wound healing. Induces macrophage recruitment, increased interstitial pressure, and blood vessel maturation during angiogenesis. Can initiate events that lead to a mesangial proliferative glomerulonephritis, including influx of monocytes and macrophages and production of extracellular matrix. The chain is Platelet-derived growth factor D (PDGFD) from Oryctolagus cuniculus (Rabbit).